The chain runs to 395 residues: Calreticulin (395 aa).

The N-terminal stretch at 1–15 is a signal peptide; that stretch reads MKSLCLLAIVAVVSA. A disulfide bond links C101 and C133. Positions 105, 107, 124, and 131 each coordinate an alpha-D-glucoside. Tandem repeats lie at residues 186-197, 205-216, 222-233, 239-250, 254-264, 268-278, and 282-292. Positions 186-250 are 4 X approximate repeats; sequence AQTGSLEEDW…DAKKPEDWDD (65 aa). The interval 193–301 is P-domain; it reads EDWDLLPAKK…PEYTPDDELY (109 aa). The span at 202–212 shows a compositional bias: basic and acidic residues; that stretch reads KIKDPDAKKPE. Positions 202–255 are disordered; it reads KIKDPDAKKPEDWDEREYIDDAEDAKPEDWEKPEHIPDPDAKKPEDWDDEMDGE. Residues 213 to 224 show a composition bias toward acidic residues; the sequence is DWDEREYIDDAE. Positions 225–246 are enriched in basic and acidic residues; that stretch reads DAKPEDWEKPEHIPDPDAKKPE. The 3 X approximate repeats stretch occupies residues 254–292; sequence GEWEPPMIDNPEYKGEWKPKQIKNPAYKGKWIHPEIENP. Positions 302–395 are C-domain; the sequence is SYESWGAIGF…KEEEEGHDEL (94 aa). D312 serves as a coordination point for an alpha-D-glucoside. Basic and acidic residues predominate over residues 340-380; it reads ETFDKLKTVEKEKKEKADEETRKAEEEARKKAEEEKEAKKD. Positions 340–395 are disordered; that stretch reads ETFDKLKTVEKEKKEKADEETRKAEEEARKKAEEEKEAKKDDDEEEKEEEEGHDEL. Acidic residues predominate over residues 381 to 395; sequence DDEEEKEEEEGHDEL. The short motif at 392 to 395 is the Prevents secretion from ER element; that stretch reads HDEL.

Belongs to the calreticulin family. Cleaved by caspase ced-3 in vitro.

Its subcellular location is the endoplasmic reticulum lumen. In terms of biological role, molecular calcium-binding chaperone promoting folding, oligomeric assembly and quality control in the endoplasmic reticulum (ER) via the calreticulin/calnexin cycle. This lectin may interact transiently with almost all of the monoglucosylated glycoproteins that are synthesized in the ER. Probably by controlling the folding of extracellular matrix protein unc-52/Perlecan, may play a role in the formation of fibrous organelles, a hemidesmosome-like structure attaching muscles to the epidermis. Protects dopaminergic neurons against oxidative stress-induced neurodegeneration. May play a role in protection against ER stress. Plays a role in modulating lifespan, acting by influencing ER calcium homeostasis. The chain is Calreticulin (crt-1) from Caenorhabditis elegans.